The chain runs to 489 residues: Mitochondrial distribution and morphology protein 34 (489 aa).

In terms of domain architecture, SMP-LTD spans 1–205 (MSFNINWDSI…LPSVLYKFSQ (205 aa)).

This sequence belongs to the MDM34 family. As to quaternary structure, component of the ER-mitochondria encounter structure (ERMES) or MDM complex, composed of MMM1, MDM10, MDM12 and MDM34.

It is found in the mitochondrion outer membrane. Functionally, component of the ERMES/MDM complex, which serves as a molecular tether to connect the endoplasmic reticulum (ER) and mitochondria. Components of this complex are involved in the control of mitochondrial shape and protein biogenesis, and function in nonvesicular lipid trafficking between the ER and mitochondria. MDM34 is required for the interaction of the ER-resident membrane protein MMM1 and the outer mitochondrial membrane-resident beta-barrel protein MDM10. The polypeptide is Mitochondrial distribution and morphology protein 34 (Komagataella phaffii (strain GS115 / ATCC 20864) (Yeast)).